The chain runs to 381 residues: tRNA (guanine(26)-N(2))-dimethyltransferase (381 aa).

Residues 6–378 (FEVHEGKAKV…APYEVFVEVM (373 aa)) enclose the Trm1 methyltransferase domain. Arg-38, Arg-63, Asp-80, Asp-122, and Ala-123 together coordinate S-adenosyl-L-methionine.

This sequence belongs to the class I-like SAM-binding methyltransferase superfamily. Trm1 family. Monomer.

The enzyme catalyses guanosine(26) in tRNA + 2 S-adenosyl-L-methionine = N(2)-dimethylguanosine(26) in tRNA + 2 S-adenosyl-L-homocysteine + 2 H(+). Its function is as follows. Dimethylates a single guanine residue at position 26 of a number of tRNAs using S-adenosyl-L-methionine as donor of the methyl groups. The sequence is that of tRNA (guanine(26)-N(2))-dimethyltransferase from Pyrococcus furiosus (strain ATCC 43587 / DSM 3638 / JCM 8422 / Vc1).